Reading from the N-terminus, the 225-residue chain is Ribonuclease 3 (225 aa).

The RNase III domain occupies 5-127; the sequence is IEKLTRQLGY…IIGAVYLDSD (123 aa). Glutamate 40 provides a ligand contact to Mg(2+). Aspartate 44 is an active-site residue. Mg(2+) is bound by residues aspartate 113 and glutamate 116. Glutamate 116 is a catalytic residue. Positions 154 to 224 constitute a DRBM domain; it reads DPKTRLQEFL…AELALEQLTN (71 aa).

Belongs to the ribonuclease III family. In terms of assembly, homodimer. It depends on Mg(2+) as a cofactor.

It localises to the cytoplasm. It catalyses the reaction Endonucleolytic cleavage to 5'-phosphomonoester.. Functionally, digests double-stranded RNA. Involved in the processing of primary rRNA transcript to yield the immediate precursors to the large and small rRNAs (23S and 16S). Processes some mRNAs, and tRNAs when they are encoded in the rRNA operon. Processes pre-crRNA and tracrRNA of type II CRISPR loci if present in the organism. The sequence is that of Ribonuclease 3 from Vibrio vulnificus (strain YJ016).